The sequence spans 96 residues: Complement inhibitor RaCI4 (96 aa).

The signal sequence occupies residues 1–24 (MSAFNIFALVVVVCALMINECCTS). Intrachain disulfides connect C37/C61, C42/C63, and C57/C78.

This sequence belongs to the RaCI family. In terms of tissue distribution, expressed in salivary glands.

It localises to the secreted. Functionally, complement inhibitor. Prevents complement-mediated C5 activation by binding to C5. Binds C5 at a different binding site than the other tick complement inhibitors OmCI and CirpT1, and the drug eculizumab. Inhibits complement in human and guinea pig but not in other species tested (rabbit, rat, mouse, and pig). The sequence is that of Complement inhibitor RaCI4 from Hyalomma rufipes (Tick).